The following is a 311-amino-acid chain: Formyltransferase/hydrolase complex subunit D (311 aa).

Belongs to the FTR family. Homotetramer. Octaheteromer. Part of the formyltransferase/hydrolase complex fhc; composed of FhcA, FhcB, FhcC and FhcD.

Its subcellular location is the cytoplasm. The catalysed reaction is N-formylmethanofuran + 5,6,7,8-tetrahydromethanopterin + H(+) = N(5)-formyl-5,6,7,8-tetrahydromethanopterin + methanofuran. Its pathway is one-carbon metabolism; formaldehyde degradation; formate from formaldehyde (H(4)MPT route): step 4/5. Its function is as follows. Involved in the transformation of 5-formyl tetrahydromethanopterin (5-formyl-H(4)MPT) to methanofuran (MFR) and formate via the intermediate formylmethanofuran (formyl-MFR). Catalyzes the transfer of a formyl group from 5-formyl-H(4)MPT to MFR to produce tetrahydromethanopterin (H(4)MPT) and formyl-MFR, which is then hydrolyzed to formate and MFR. The polypeptide is Formyltransferase/hydrolase complex subunit D (Methylorubrum extorquens (strain ATCC 14718 / DSM 1338 / JCM 2805 / NCIMB 9133 / AM1) (Methylobacterium extorquens)).